Consider the following 212-residue polypeptide: ATP phosphoribosyltransferase (212 aa).

The protein belongs to the ATP phosphoribosyltransferase family. Short subfamily. In terms of assembly, heteromultimer composed of HisG and HisZ subunits.

The protein localises to the cytoplasm. It catalyses the reaction 1-(5-phospho-beta-D-ribosyl)-ATP + diphosphate = 5-phospho-alpha-D-ribose 1-diphosphate + ATP. It participates in amino-acid biosynthesis; L-histidine biosynthesis; L-histidine from 5-phospho-alpha-D-ribose 1-diphosphate: step 1/9. Its function is as follows. Catalyzes the condensation of ATP and 5-phosphoribose 1-diphosphate to form N'-(5'-phosphoribosyl)-ATP (PR-ATP). Has a crucial role in the pathway because the rate of histidine biosynthesis seems to be controlled primarily by regulation of HisG enzymatic activity. In Geobacter metallireducens (strain ATCC 53774 / DSM 7210 / GS-15), this protein is ATP phosphoribosyltransferase.